We begin with the raw amino-acid sequence, 122 residues long: Large ribosomal subunit protein uL14 (122 aa).

This sequence belongs to the universal ribosomal protein uL14 family. In terms of assembly, part of the 50S ribosomal subunit. Forms a cluster with proteins L3 and L19. In the 70S ribosome, L14 and L19 interact and together make contacts with the 16S rRNA in bridges B5 and B8.

Functionally, binds to 23S rRNA. Forms part of two intersubunit bridges in the 70S ribosome. This is Large ribosomal subunit protein uL14 from Allorhizobium ampelinum (strain ATCC BAA-846 / DSM 112012 / S4) (Agrobacterium vitis (strain S4)).